Consider the following 180-residue polypeptide: MSRLKKLYTEEIRKTLQDKFQYENVMQIPVLKKIVISMGLAEAAKDKNLFQAHLEELAVISGQKPLVTRAKNSIAGFKLREGQGIGAKVTLRGIRMYDFMDRFCNIVSPRIRDFRGFSCKGDGRGCYSLGLDDQQIFPEVDLDRVKRSQGMNITWVTTAQTDAECLTLLECMGLRFKKAQ.

Belongs to the universal ribosomal protein uL5 family. In terms of assembly, part of the 50S ribosomal subunit; part of the 5S rRNA/L5/L18/L25 subcomplex. Contacts the 5S rRNA and the P site tRNA. Forms a bridge to the 30S subunit in the 70S ribosome.

This is one of the proteins that bind and probably mediate the attachment of the 5S RNA into the large ribosomal subunit, where it forms part of the central protuberance. In the 70S ribosome it contacts protein S13 of the 30S subunit (bridge B1b), connecting the 2 subunits; this bridge is implicated in subunit movement. Contacts the P site tRNA; the 5S rRNA and some of its associated proteins might help stabilize positioning of ribosome-bound tRNAs. The chain is Large ribosomal subunit protein uL5 from Chlamydia trachomatis serovar L2 (strain ATCC VR-902B / DSM 19102 / 434/Bu).